The chain runs to 208 residues: Small ribosomal subunit protein eS1 (208 aa).

The protein belongs to the eukaryotic ribosomal protein eS1 family.

This is Small ribosomal subunit protein eS1 from Saccharolobus solfataricus (strain ATCC 35092 / DSM 1617 / JCM 11322 / P2) (Sulfolobus solfataricus).